A 449-amino-acid chain; its full sequence is Probable glycosyltransferase 5 (449 aa).

The span at 1–14 (MMEKHGGKVTSDRR) shows a compositional bias: basic and acidic residues. The tract at residues 1-24 (MMEKHGGKVTSDRRAGRRQHGQRC) is disordered. Residues 1–28 (MMEKHGGKVTSDRRAGRRQHGQRCSASD) lie on the Cytoplasmic side of the membrane. A helical; Signal-anchor for type II membrane protein membrane pass occupies residues 29 to 49 (AAPLVVVVILIVGALFLILGP). At 50–449 (TGSSSFTVPR…HPTFRAARPT (400 aa)) the chain is on the lumenal side. The interval 74 to 109 (APPPPPPPAQMQAGANASSEEDSGLPPPRQLTDPPY) is disordered. Residues Asn89, Asn413, and Asn422 are each glycosylated (N-linked (GlcNAc...) asparagine).

The protein belongs to the glycosyltransferase 34 family.

The protein localises to the golgi apparatus membrane. In terms of biological role, probable glycosyltransferase that may be involved in the biosynthesis of xyloglucan. This is Probable glycosyltransferase 5 from Oryza sativa subsp. indica (Rice).